A 207-amino-acid chain; its full sequence is Glycerol-3-phosphate acyltransferase (207 aa).

6 consecutive transmembrane segments (helical) span residues 1-21 (MIIIAYLLGSIQTGLWIGKYF), 42-62 (ILGVKAGIVTLTIDILKGTLA), 65-85 (IPIILGITTISPFFIGFFAII), 105-125 (AGVLLGFAPSFFLYLLVIFLL), 138-158 (ITVAVVGILSVLIFPLVGFIL), and 159-179 (TDYDWIFTTVVILMALTIIIR).

The protein belongs to the PlsY family. Probably interacts with PlsX.

It is found in the cell membrane. The enzyme catalyses an acyl phosphate + sn-glycerol 3-phosphate = a 1-acyl-sn-glycero-3-phosphate + phosphate. It participates in lipid metabolism; phospholipid metabolism. Functionally, catalyzes the transfer of an acyl group from acyl-phosphate (acyl-PO(4)) to glycerol-3-phosphate (G3P) to form lysophosphatidic acid (LPA). This enzyme utilizes acyl-phosphate as fatty acyl donor, but not acyl-CoA or acyl-ACP. This chain is Glycerol-3-phosphate acyltransferase, found in Streptococcus agalactiae serotype Ia (strain ATCC 27591 / A909 / CDC SS700).